A 1003-amino-acid polypeptide reads, in one-letter code: Glycine--tRNA ligase (1003 aa).

The interval 1 to 310 (MSSQPLTLQT…VTPKKIPTIC (310 aa)) is glycine--tRNA ligase alpha subunit. The segment at 311 to 1003 (QPEDFLLEIG…CFGFYAWGVL (693 aa)) is glycine--tRNA ligase beta subunit.

Belongs to the class-II aminoacyl-tRNA synthetase family.

The protein localises to the cytoplasm. It carries out the reaction tRNA(Gly) + glycine + ATP = glycyl-tRNA(Gly) + AMP + diphosphate. This Chlamydia trachomatis serovar D (strain ATCC VR-885 / DSM 19411 / UW-3/Cx) protein is Glycine--tRNA ligase (glyQS).